Here is a 55-residue protein sequence, read N- to C-terminus: Large ribosomal subunit protein bL33 (55 aa).

A compositionally biased stretch (basic and acidic residues) spans 1–11; sequence MAKSGRDKIKL. Positions 1-27 are disordered; that stretch reads MAKSGRDKIKLESTAGTGHFYTTTKNK. Positions 14-24 are enriched in polar residues; that stretch reads TAGTGHFYTTT.

Belongs to the bacterial ribosomal protein bL33 family.

This is Large ribosomal subunit protein bL33 from Herminiimonas arsenicoxydans.